The sequence spans 273 residues: NAD-dependent protein deacylase (273 aa).

A Deacetylase sirtuin-type domain is found at 20–272; it reads RERLRQRIFF…PEFVEKLLEG (253 aa). An NAD(+)-binding site is contributed by 48-67; it reads GAGISAESGIRTFRAADGLW. Positions 92 and 95 each coordinate substrate. Residue 129–132 participates in NAD(+) binding; sequence QNID. The Proton acceptor role is filled by His147. Residues Cys155 and Cys174 each coordinate Zn(2+). NAD(+)-binding positions include 214–216, 240–242, and Ala258; these read GTS and NLE.

It belongs to the sirtuin family. Class III subfamily. Zn(2+) serves as cofactor.

It is found in the cytoplasm. It catalyses the reaction N(6)-acetyl-L-lysyl-[protein] + NAD(+) + H2O = 2''-O-acetyl-ADP-D-ribose + nicotinamide + L-lysyl-[protein]. It carries out the reaction N(6)-succinyl-L-lysyl-[protein] + NAD(+) + H2O = 2''-O-succinyl-ADP-D-ribose + nicotinamide + L-lysyl-[protein]. The catalysed reaction is N(6)-(2-hydroxyisobutanoyl)-L-lysyl-[protein] + NAD(+) + H2O = 2''-O-(2-hydroxyisobutanoyl)-ADP-D-ribose + nicotinamide + L-lysyl-[protein]. NAD-dependent lysine deacetylase that specifically removes acetyl groups on target proteins. Also acts as a protein-lysine deacylase by mediating protein desuccinylation and de-2-hydroxyisobutyrylation. Modulates the activities of several proteins which are inactive in their acylated form. The chain is NAD-dependent protein deacylase from Shigella flexneri.